We begin with the raw amino-acid sequence, 142 residues long: MDQKIPYDDYQLPVVFLPSYENPPAWIPPQERIHHPDYNNELAQFLPRTIVLKKPPGAQLGFNIRGGKASQLGIFISKVVPDSDAHRAGLQEGDQVLSVNEVDFQDIEHSRAVEILKTAREILMKVRYFPYNYQRQKERTVH.

Positions 49 to 131 (TIVLKKPPGA…ILMKVRYFPY (83 aa)) constitute a PDZ domain.

The protein resides in the cytoplasm. This chain is PDZ domain-containing protein 11 (pdzd11), found in Danio rerio (Zebrafish).